A 143-amino-acid polypeptide reads, in one-letter code: Flagellar assembly factor FliW (143 aa).

This sequence belongs to the FliW family. As to quaternary structure, interacts with translational regulator CsrA and flagellin(s).

The protein resides in the cytoplasm. Its function is as follows. Acts as an anti-CsrA protein, binds CsrA and prevents it from repressing translation of its target genes, one of which is flagellin. Binds to flagellin and participates in the assembly of the flagellum. In Clostridium botulinum (strain Langeland / NCTC 10281 / Type F), this protein is Flagellar assembly factor FliW.